Here is a 337-residue protein sequence, read N- to C-terminus: Phenylalanine--tRNA ligase alpha subunit (337 aa).

Glutamate 258 contacts Mg(2+).

The protein belongs to the class-II aminoacyl-tRNA synthetase family. Phe-tRNA synthetase alpha subunit type 1 subfamily. In terms of assembly, tetramer of two alpha and two beta subunits. It depends on Mg(2+) as a cofactor.

The protein localises to the cytoplasm. The enzyme catalyses tRNA(Phe) + L-phenylalanine + ATP = L-phenylalanyl-tRNA(Phe) + AMP + diphosphate + H(+). This Burkholderia thailandensis (strain ATCC 700388 / DSM 13276 / CCUG 48851 / CIP 106301 / E264) protein is Phenylalanine--tRNA ligase alpha subunit.